Here is a 115-residue protein sequence, read N- to C-terminus: Large ribosomal subunit protein uL18 (115 aa).

Belongs to the universal ribosomal protein uL18 family. In terms of assembly, part of the 50S ribosomal subunit; part of the 5S rRNA/L5/L18/L25 subcomplex. Contacts the 5S and 23S rRNAs.

This is one of the proteins that bind and probably mediate the attachment of the 5S RNA into the large ribosomal subunit, where it forms part of the central protuberance. In Ruthia magnifica subsp. Calyptogena magnifica, this protein is Large ribosomal subunit protein uL18.